The sequence spans 368 residues: Mitogen-activated protein kinase HOG1B (368 aa).

Residues Y20–L299 enclose the Protein kinase domain. ATP contacts are provided by residues V26 to V34 and K49. The active-site Proton acceptor is D141. T171 is subject to Phosphothreonine. A TXY motif is present at residues T171 to Y173. Y173 is modified (phosphotyrosine).

The protein belongs to the protein kinase superfamily. Ser/Thr protein kinase family. MAP kinase subfamily. HOG1 sub-subfamily. The cofactor is Mg(2+). In terms of processing, phosphorylated. Dually phosphorylated on Thr-171 and Tyr-173, which activates the enzyme. Rapidly dephosphorylated upon either hypo- or hyperosmotic shock.

The protein resides in the cytoplasm. The protein localises to the nucleus. It carries out the reaction L-seryl-[protein] + ATP = O-phospho-L-seryl-[protein] + ADP + H(+). It catalyses the reaction L-threonyl-[protein] + ATP = O-phospho-L-threonyl-[protein] + ADP + H(+). Activated by tyrosine and threonine phosphorylation. In terms of biological role, mitogen-activated protein kinase involved in a signal transduction pathway that is activated by changes in the osmolarity of the extracellular environment. Controls osmotic regulation of transcription of target genes. The polypeptide is Mitogen-activated protein kinase HOG1B (HOG1B) (Wallemia ichthyophaga (strain EXF-994 / CBS 113033)).